The following is a 380-amino-acid chain: Maintenance of mitochondrial morphology protein 1 (380 aa).

The Lumenal segment spans residues 1-64 (MQGRAIWAEG…IVPSLSFIQG (64 aa)). The helical transmembrane segment at 65–85 (FMAGQAVLLMLFLGLFRYFFM) threads the bilayer. At 86–380 (TSSPGTRAQQ…IGTSPADPLA (295 aa)) the chain is on the cytoplasmic side. The 223-residue stretch at 147–369 (APESLDWLNV…WPHFWHIPLP (223 aa)) folds into the SMP-LTD domain.

Belongs to the MMM1 family. In terms of assembly, homodimer. Component of the ER-mitochondria encounter structure (ERMES) or MDM complex, composed of MMM1, MDM10, MDM12 and MDM34. An MMM1 homodimer associates with one molecule of MDM12 on each side in a pairwise head-to-tail manner, and the SMP-LTD domains of MMM1 and MDM12 generate a continuous hydrophobic tunnel for phospholipid trafficking.

Its subcellular location is the endoplasmic reticulum membrane. Component of the ERMES/MDM complex, which serves as a molecular tether to connect the endoplasmic reticulum (ER) and mitochondria. Components of this complex are involved in the control of mitochondrial shape and protein biogenesis, and function in nonvesicular lipid trafficking between the ER and mitochondria. The MDM12-MMM1 subcomplex functions in the major beta-barrel assembly pathway that is responsible for biogenesis of all outer membrane beta-barrel proteins, and acts in a late step after the SAM complex. The MDM10-MDM12-MMM1 subcomplex further acts in the TOM40-specific pathway after the action of the MDM12-MMM1 complex. Essential for establishing and maintaining the structure of mitochondria and maintenance of mtDNA nucleoids. This Malassezia globosa (strain ATCC MYA-4612 / CBS 7966) (Dandruff-associated fungus) protein is Maintenance of mitochondrial morphology protein 1.